Reading from the N-terminus, the 370-residue chain is Anthranilate phosphoribosyltransferase (370 aa).

5-phospho-alpha-D-ribose 1-diphosphate-binding positions include glycine 82, 85–86 (GD), threonine 90, 92–95 (NVST), 110–118 (KHGNRAATS), and serine 122. Glycine 82 contacts anthranilate. Serine 94 contributes to the Mg(2+) binding site. Anthranilate is bound at residue asparagine 113. Anthranilate is bound at residue arginine 168. Mg(2+) is bound by residues aspartate 226 and glutamate 227.

It belongs to the anthranilate phosphoribosyltransferase family. In terms of assembly, homodimer. Mg(2+) is required as a cofactor.

It carries out the reaction N-(5-phospho-beta-D-ribosyl)anthranilate + diphosphate = 5-phospho-alpha-D-ribose 1-diphosphate + anthranilate. It participates in amino-acid biosynthesis; L-tryptophan biosynthesis; L-tryptophan from chorismate: step 2/5. Its function is as follows. Catalyzes the transfer of the phosphoribosyl group of 5-phosphorylribose-1-pyrophosphate (PRPP) to anthranilate to yield N-(5'-phosphoribosyl)-anthranilate (PRA). The polypeptide is Anthranilate phosphoribosyltransferase (Methanosarcina acetivorans (strain ATCC 35395 / DSM 2834 / JCM 12185 / C2A)).